A 122-amino-acid polypeptide reads, in one-letter code: Histone H2B (122 aa).

Residues 1 to 31 (MPPKPSGKGQKKAGKAKGAPSTNKKRKRKRK) form a disordered region. Position 2 is a n,N-dimethylproline (proline 2). Glutamine 10 participates in a covalent cross-link: Isoglutamyl lysine isopeptide (Gln-Lys) (interchain with K-5 in histone H4). Serine 109 is a glycosylation site (O-linked (GlcNAc) serine). A Glycyl lysine isopeptide (Lys-Gly) (interchain with G-Cter in ubiquitin) cross-link involves residue lysine 117.

It belongs to the histone H2B family. As to quaternary structure, the nucleosome is a histone octamer containing two molecules each of H2A, H2B, H3 and H4 assembled in one H3-H4 heterotetramer and two H2A-H2B heterodimers. The octamer wraps approximately 147 bp of DNA. In terms of processing, monoubiquitination of Lys-117 gives a specific tag for epigenetic transcriptional activation and is also prerequisite for histone H3 'Lys-4' and 'Lys-79' methylation. Post-translationally, glcNAcylation at Ser-109 promotes monoubiquitination of Lys-117. It fluctuates in response to extracellular glucose, and associates with transcribed genes.

It is found in the nucleus. Its subcellular location is the chromosome. Its function is as follows. Core component of nucleosome. Nucleosomes wrap and compact DNA into chromatin, limiting DNA accessibility to the cellular machineries which require DNA as a template. Histones thereby play a central role in transcription regulation, DNA repair, DNA replication and chromosomal stability. DNA accessibility is regulated via a complex set of post-translational modifications of histones, also called histone code, and nucleosome remodeling. The protein is Histone H2B of Patiria pectinifera (Starfish).